The following is a 162-amino-acid chain: MRPEDLQDLSLLGQKSVPYIFEYTPDVLEAFPNRHPENDYFVKFNAPEFTSLCPITNQPDFATIYISYIPDEKLVESKSLKLYLFSFRNHGDFHENCINVIGKDLVKLMEPRYLEVWGKFTPRGGISIDPYYNYGKPGTKYEKMAEHRLFNHDLYPETVDNR.

Catalysis depends on Cys53, which acts as the Thioimide intermediate. Catalysis depends on Asp60, which acts as the Proton donor. Substrate-binding positions include 75–77 (VES) and 94–95 (HE).

This sequence belongs to the GTP cyclohydrolase I family. QueF type 1 subfamily.

The protein resides in the cytoplasm. The catalysed reaction is 7-aminomethyl-7-carbaguanine + 2 NADP(+) = 7-cyano-7-deazaguanine + 2 NADPH + 3 H(+). Its pathway is tRNA modification; tRNA-queuosine biosynthesis. Functionally, catalyzes the NADPH-dependent reduction of 7-cyano-7-deazaguanine (preQ0) to 7-aminomethyl-7-deazaguanine (preQ1). This is NADPH-dependent 7-cyano-7-deazaguanine reductase from Exiguobacterium sp. (strain ATCC BAA-1283 / AT1b).